The primary structure comprises 390 residues: Carbamoyl phosphate synthase small chain (390 aa).

Positions 1–198 (MTSTPTPTPT…LGEGYAVGPE (198 aa)) are CPSase. The L-glutamine site is built by S53, G250, and G252. One can recognise a Glutamine amidotransferase type-1 domain in the interval 202 to 390 (RVVVLDYGVK…VGELKGRVEA (189 aa)). The active-site Nucleophile is the C279. Positions 280, 283, 321, 323, and 324 each coordinate L-glutamine. Active-site residues include H363 and E365.

Belongs to the CarA family. As to quaternary structure, composed of two chains; the small (or glutamine) chain promotes the hydrolysis of glutamine to ammonia, which is used by the large (or ammonia) chain to synthesize carbamoyl phosphate. Tetramer of heterodimers (alpha,beta)4.

It catalyses the reaction hydrogencarbonate + L-glutamine + 2 ATP + H2O = carbamoyl phosphate + L-glutamate + 2 ADP + phosphate + 2 H(+). The enzyme catalyses L-glutamine + H2O = L-glutamate + NH4(+). Its pathway is amino-acid biosynthesis; L-arginine biosynthesis; carbamoyl phosphate from bicarbonate: step 1/1. It participates in pyrimidine metabolism; UMP biosynthesis via de novo pathway; (S)-dihydroorotate from bicarbonate: step 1/3. Its function is as follows. Small subunit of the glutamine-dependent carbamoyl phosphate synthetase (CPSase). CPSase catalyzes the formation of carbamoyl phosphate from the ammonia moiety of glutamine, carbonate, and phosphate donated by ATP, constituting the first step of 2 biosynthetic pathways, one leading to arginine and/or urea and the other to pyrimidine nucleotides. The small subunit (glutamine amidotransferase) binds and cleaves glutamine to supply the large subunit with the substrate ammonia. This Maricaulis maris (strain MCS10) (Caulobacter maris) protein is Carbamoyl phosphate synthase small chain.